Reading from the N-terminus, the 229-residue chain is Elongation factor 1-delta 1 (229 aa).

The tract at residues E80–D109 is disordered. Over residues A100 to D109 the composition is skewed to acidic residues.

This sequence belongs to the EF-1-beta/EF-1-delta family. As to quaternary structure, EF-1 is composed of 4 subunits: alpha, beta (1B-alpha=beta'), delta (1B-beta), and gamma (1B-gamma).

In terms of biological role, EF-1-beta and EF-1-beta' stimulate the exchange of GDP bound to EF-1-alpha to GTP. In Oryza sativa subsp. japonica (Rice), this protein is Elongation factor 1-delta 1.